A 196-amino-acid chain; its full sequence is Rac-like GTP-binding protein RAC9 (196 aa).

Residue 13 to 20 (GDGAVGKT) coordinates GTP. Positions 35 to 43 (YVPTVFDNF) match the Effector region motif. Residues 60-64 (DTAGQ) and 118-121 (TKLD) contribute to the GTP site. Residue Cys193 is modified to Cysteine methyl ester. Cys193 is lipidated: S-geranylgeranyl cysteine. Positions 194 to 196 (AFL) are cleaved as a propeptide — removed in mature form.

The protein belongs to the small GTPase superfamily. Rho family.

The protein localises to the cytoplasm. Its subcellular location is the membrane. In terms of biological role, inactive GDP-bound Rho GTPases reside in the cytosol, are found in a complex with Rho GDP-dissociation inhibitors (Rho GDIs), and are released from the GDI protein in order to translocate to membranes upon activation. The chain is Rac-like GTP-binding protein RAC9 (RAC9) from Gossypium hirsutum (Upland cotton).